The chain runs to 355 residues: Spore germination protein XB (355 aa).

A run of 10 helical transmembrane segments spans residues 2–24, 34–56, 69–91, 106–128, 135–157, 180–197, 210–232, 265–287, 299–321, and 326–348; these read VNFF…VIII, DSWI…VFIV, LMRN…YLII, FYLP…FYNI, IALT…MIAN, GMIY…ILFL, LIIV…IVEF, VYQW…PDVL, ISIL…SFYW, and VFLP…FVWV.

Belongs to the amino acid-polyamine-organocation (APC) superfamily. Spore germination protein (SGP) (TC 2.A.3.9) family.

Its subcellular location is the cell membrane. Its function is as follows. May allow B.anthracis to germinate within phagocytic cells and therefore involved in virulence. The sequence is that of Spore germination protein XB (gerXB) from Bacillus anthracis.